Here is a 205-residue protein sequence, read N- to C-terminus: Ras-related protein RABB1a (205 aa).

Position 13–20 (13–20 (GDTGVGKS)) interacts with GTP. An Effector region motif is present at residues 35–43 (HDLTIGVEF). GTP-binding positions include 61-65 (DTAGQ), 119-122 (NKCD), and 149-150 (SA). The tract at residues 179–205 (ANEPGITPGPFGGKDASSSQQRRGCCG) is disordered. Residues 194 to 205 (ASSSQQRRGCCG) are compositionally biased toward polar residues. 2 S-geranylgeranyl cysteine lipidation sites follow: Cys-203 and Cys-204.

It belongs to the small GTPase superfamily. Rab family.

It is found in the cell membrane. Its function is as follows. Intracellular vesicle trafficking and protein transport. The polypeptide is Ras-related protein RABB1a (RABB1A) (Arabidopsis thaliana (Mouse-ear cress)).